A 121-amino-acid chain; its full sequence is Small ribosomal subunit protein uS13 (121 aa).

Residues 95–121 are disordered; it reads LPVRGQNTKNNARTRKGKAVAIAGKKK. Basic residues predominate over residues 106 to 121; sequence ARTRKGKAVAIAGKKK.

It belongs to the universal ribosomal protein uS13 family. Part of the 30S ribosomal subunit. Forms a loose heterodimer with protein S19. Forms two bridges to the 50S subunit in the 70S ribosome.

Its function is as follows. Located at the top of the head of the 30S subunit, it contacts several helices of the 16S rRNA. In the 70S ribosome it contacts the 23S rRNA (bridge B1a) and protein L5 of the 50S subunit (bridge B1b), connecting the 2 subunits; these bridges are implicated in subunit movement. Contacts the tRNAs in the A and P-sites. The chain is Small ribosomal subunit protein uS13 from Streptococcus equi subsp. zooepidemicus (strain H70).